The following is a 1563-amino-acid chain: MKRGLLPFNKIKLLLASPEQILSWSHGEVKRPETLNYRTLKPEKEGLFCAKIFGPLKDYECLCGKYKGKRFEGTICDRCGVEVTKAYVRRERFGHITLATPCAHIWFLKSSPSKIGALLGLSARDIEKVIYFESYLVVEYPTPDMEATFSNSENTIPVIKDGVTHHVKLHVVTEEQYEKEFAYSIDNRYESGMGAEFVRYVLSILDLETFAFKLKKILKPYTFGFEDLGPKMELEHKKLYEKIIMFLADRVKLYSVGIATSLNGVQMSIEDVIHGIVSESIYLNIKTGEISNQDLGDDWYTSKDAIRYRFEYVRGQNQNIPVFDKIQEDVRNIVLKDFSDTRVKNLVKTLKLVEGFLKSSNRPEWMILTVLPVIPPELRPLVALDGGKFATSDLNDLYRRLINRNNRLKRLIDLDAPDIIVRNEKRMLQESVDVLIDNGKRGKVVSQHNRPLKSLSDYLKGKQGRFRQNLLGKRVDYSGRSVIVVGPSLKMHQCGLPKIMALELFKPFVYRRLEEKGYATSIKNARKMVDQKQPEVWECLEEVVKQHPVLLNRAPTLHRMSIQAFEPVLVEGKAIQLHPLVCPPFNADFDGDQMAVHVPLGIEAQLESYILILSTQNILSPANGRPIMLPSQDMVLGLFYASNYVKGAKGEGKVFFSKEDAFLAFENKKIDIHAVIKVKIGDTFVETNIGRLLINEALPKGYRFVNEVLDKKSISKLIADIHKIYGSEITAQTLDRLKEFGFEMATRAGISIGIEDMKIPKAKKRLVDKAFHQMDEVLDQYRKGIITNKERYNKTIDIWSQTTEDVTKAMFSEIEKSEQIENGKKLPGLFNPIYMMANSGARGNKDQLRQLAGMRGLMAKHSGEFIETPITSNFREGLSVLEYFISTYGARKGLADTALKTSFAGYLTRRLVDVAQDMVISEYDCGTKKYEVIEAIVESGEEKISLKERLIGRVLAEDIYDPNSKELIAKANDVLDEELTARIQQAGVVQVKARSVLNCESENGICSMCYGWDLSQRKLVSPGEAVGIIAAQSIGEPGTQLTMRTFHIGGAATAQKVQSELIIESSGIIKFQGLRLLKNRNGGLINISQEGVIFVLDPNGRTIERHTVPYAAEILFKDGSEVKQGDIVAKWDPFNTYIIAESSGELVLKDIIVDVTVREEKDTLTGKTAIVVSFLRAKDAQLHSPRIVIKSEDGNEYSYDLPVNSILNIPFEKLKTIWDKCLACSEAEKNDVQHNYYYLDKFVVHPGDIIARIPKETTKVRDIVGGLPRVEELFEARKPKNPAIISEIDGIVKIYEDADEVMVISPKGTKKYDIKNEFILIKHGQEVKEGTKITDTIVSDVSGKAIVRAKGSKIVVYNKQTGQEKVYSVPKGKFLQVKDGDYVKVGDQLTDGTPLLEEILKIKGIDELQKFLLKEVQMVYKLQGVDINDKHIEIIIRQMLRKRVIVDPGDSRFVANEEVDVIEFNKEVERIRKEDGKIPKAEPILVGITKAALSTKSWISAASFQETTRVLTEAASEGKVDDLSGIKENVIIGNLIPAGTGLEEYKNVKIEIAEHVTQFKKQT.

The Zn(2+) site is built by cysteine 61, cysteine 63, cysteine 76, and cysteine 79. Aspartate 588, aspartate 590, and aspartate 592 together coordinate Mg(2+). Cysteine 925, cysteine 999, cysteine 1006, and cysteine 1009 together coordinate Zn(2+).

Belongs to the RNA polymerase beta' chain family. In terms of assembly, the RNAP catalytic core consists of 2 alpha, 1 beta, 1 beta' and 1 omega subunit. When a sigma factor is associated with the core the holoenzyme is formed, which can initiate transcription. Mg(2+) is required as a cofactor. It depends on Zn(2+) as a cofactor.

It catalyses the reaction RNA(n) + a ribonucleoside 5'-triphosphate = RNA(n+1) + diphosphate. DNA-dependent RNA polymerase catalyzes the transcription of DNA into RNA using the four ribonucleoside triphosphates as substrates. This is DNA-directed RNA polymerase subunit beta' from Hydrogenobaculum sp. (strain Y04AAS1).